A 470-amino-acid chain; its full sequence is O-acyltransferase pboC (470 aa).

Catalysis depends on proton acceptor residues His149 and Asp386.

The protein belongs to the plant acyltransferase family. As to quaternary structure, monomer.

The protein operates within secondary metabolite biosynthesis. In terms of biological role, O-acetyltransferase; part of the gene cluster that mediates the biosynthesis of protubonine B, a hydroxylated and diacetylated cyclo-L-Trp-L-Leu derivative. Within the pathway, pboC catalyzes the acetylation of protubonine D at the hydroxy group to produce protubonine C. The first step of the protubonine B synthesis is performed by the nonribosomal peptide synthetase pboA that catalyzes the formation of cyclo-L-Trp-L-Leu by condensing L-Leu with L-Trp. The flavin-dependent monooxygenase pboD is responsible for hydroxylation at C-3 of the indole ring and subsequent formation of the pyrrolidine ring, leadind to protubonine D. Protubonine D is further diacetylated by two acetyltransferases, pboB and pboC, to form the final product protubonine B via protubonine C. In Aspergillus ustus, this protein is O-acyltransferase pboC.